A 400-amino-acid polypeptide reads, in one-letter code: Canavanine gamma-lyase (400 aa).

Position 213 is an N6-(pyridoxal phosphate)lysine (lysine 213).

This sequence belongs to the trans-sulfuration enzymes family. Pyridoxal 5'-phosphate is required as a cofactor.

The enzyme catalyses L-canavanine + H2O = N-hydroxyguanidine + L-homoserine. In terms of biological role, lyase involved in the degradation of canavanine, the delta-oxa-analog of arginine, allowing growth on canavanine as sole nitrogen and carbon source. Catalyzes the elimination of hydroxyguanidine from canavanine with a subsequent water addition to yield homoserine. Is highly specific for canavanine and cannot use methionine, cystathionine or arginine. This chain is Canavanine gamma-lyase, found in Pseudomonas canavaninivorans.